The sequence spans 132 residues: MGNDTIGSMITCIRNGNLSKAKTVEVPATQITRSIANILLQEGYIANVRERQYNAIRMLVITLKYQTKTRKPHITIIKYISKPGLRVYSNHQDIPQFLGEMGIVILSTSKGIMMHREARAQKVGGEVLCYVW.

The protein belongs to the universal ribosomal protein uS8 family. As to quaternary structure, part of the 30S ribosomal subunit.

Its subcellular location is the plastid. The protein localises to the chloroplast. One of the primary rRNA binding proteins, it binds directly to 16S rRNA central domain where it helps coordinate assembly of the platform of the 30S subunit. This is Small ribosomal subunit protein uS8c (rps8) from Zygnema circumcarinatum (Green alga).